We begin with the raw amino-acid sequence, 425 residues long: 5'-deoxyadenosine deaminase (425 aa).

Zn(2+) is bound by residues histidine 62 and histidine 64. The substrate site is built by glutamate 91 and histidine 183. Position 210 (histidine 210) interacts with Zn(2+). Substrate is bound by residues glutamate 213 and aspartate 298. Zn(2+) is bound at residue aspartate 298.

The protein belongs to the metallo-dependent hydrolases superfamily. MTA/SAH deaminase family. In terms of assembly, homotetramer. Zn(2+) serves as cofactor.

The enzyme catalyses 5'-deoxyadenosine + H2O + H(+) = 5'-deoxyinosine + NH4(+). It catalyses the reaction S-adenosyl-L-homocysteine + H2O + H(+) = S-inosyl-L-homocysteine + NH4(+). The catalysed reaction is S-methyl-5'-thioadenosine + H2O + H(+) = S-methyl-5'-thioinosine + NH4(+). It carries out the reaction adenosine + H2O + H(+) = inosine + NH4(+). It functions in the pathway amino-acid biosynthesis; S-adenosyl-L-methionine biosynthesis. Its function is as follows. Catalyzes the deamination of three SAM-derived enzymatic products, namely 5'-deoxyadenosine, S-adenosyl-L-homocysteine, and 5'-methylthioadenosine, to produce the inosine analogs. Can also deaminate adenosine. The preferred substrate for this enzyme is 5'-deoxyadenosine, but all these substrates are efficiently deaminated. Likely functions in a S-adenosyl-L-methionine (SAM) recycling pathway from S-adenosyl-L-homocysteine (SAH) produced from SAM-dependent methylation reactions. May also be involved in the recycling of 5'-deoxyadenosine, whereupon the 5'-deoxyribose moiety of 5'-deoxyinosine is further metabolized to deoxyhexoses used for the biosynthesis of aromatic amino acids in methanogens. In Methanosphaera stadtmanae (strain ATCC 43021 / DSM 3091 / JCM 11832 / MCB-3), this protein is 5'-deoxyadenosine deaminase.